The sequence spans 492 residues: ATP synthase subunit beta, chloroplastic (492 aa).

Residue 170 to 177 (GGAGVGKT) coordinates ATP.

Belongs to the ATPase alpha/beta chains family. In terms of assembly, F-type ATPases have 2 components, CF(1) - the catalytic core - and CF(0) - the membrane proton channel. CF(1) has five subunits: alpha(3), beta(3), gamma(1), delta(1), epsilon(1). CF(0) has four main subunits: a(1), b(1), b'(1) and c(9-12).

The protein localises to the plastid. It localises to the chloroplast thylakoid membrane. The enzyme catalyses ATP + H2O + 4 H(+)(in) = ADP + phosphate + 5 H(+)(out). Produces ATP from ADP in the presence of a proton gradient across the membrane. The catalytic sites are hosted primarily by the beta subunits. The sequence is that of ATP synthase subunit beta, chloroplastic from Anthoceros angustus (Hornwort).